A 309-amino-acid chain; its full sequence is Short chain dehydrogenase MYCFIDRAFT_6125 (309 aa).

NADP(+)-binding residues include Ile43, Arg67, Asp88, and Arg150. The active-site Proton donor is Ser168. Residues Tyr182, Lys186, Val215, and Ser217 each contribute to the NADP(+) site. Residue Tyr182 is the Proton acceptor of the active site. Catalysis depends on Lys186, which acts as the Lowers pKa of active site Tyr.

Belongs to the short-chain dehydrogenases/reductases (SDR) family.

The protein operates within secondary metabolite biosynthesis. Functionally, short chain dehydrogenase; part of the gene cluster that mediates the biosynthesis of an emodin derivative that may be involved in black Sigatoka disease of banana. The pathway begins with the synthesis of atrochrysone thioester by the polyketide synthase PKS8-1. The atrochrysone carboxyl ACP thioesterase MYCFIDRAFT_190111 then breaks the thioester bond and releases the atrochrysone carboxylic acid from PKS8-1. The decarboxylase MYCFIDRAFT_34057 then catalyzes the concerted decarboxylation-elimination required to convert atochrysone carboxylic acid into emodin anthrone, which is further oxidized to emodin by the anthrone oxygenase MYCFIDRAFT_34418. The functions of the other tailoring enzymes as well as the final product of the cluster have still to be identified. In Pseudocercospora fijiensis (strain CIRAD86) (Black leaf streak disease fungus), this protein is Short chain dehydrogenase MYCFIDRAFT_6125.